A 388-amino-acid chain; its full sequence is Succinate--CoA ligase [ADP-forming] subunit beta (388 aa).

An ATP-grasp domain is found at 9–244 (KEILRKFGVA…LDEEDPAEIE (236 aa)). ATP is bound by residues Lys-46, 53 to 55 (GRG), Glu-99, Ala-102, and Glu-107. Mg(2+) contacts are provided by Asn-199 and Asp-213. Residues Asn-264 and 321 to 323 (GIM) each bind substrate.

The protein belongs to the succinate/malate CoA ligase beta subunit family. Heterotetramer of two alpha and two beta subunits. Requires Mg(2+) as cofactor.

It carries out the reaction succinate + ATP + CoA = succinyl-CoA + ADP + phosphate. The enzyme catalyses GTP + succinate + CoA = succinyl-CoA + GDP + phosphate. Its pathway is carbohydrate metabolism; tricarboxylic acid cycle; succinate from succinyl-CoA (ligase route): step 1/1. Its function is as follows. Succinyl-CoA synthetase functions in the citric acid cycle (TCA), coupling the hydrolysis of succinyl-CoA to the synthesis of either ATP or GTP and thus represents the only step of substrate-level phosphorylation in the TCA. The beta subunit provides nucleotide specificity of the enzyme and binds the substrate succinate, while the binding sites for coenzyme A and phosphate are found in the alpha subunit. This chain is Succinate--CoA ligase [ADP-forming] subunit beta, found in Burkholderia cenocepacia (strain ATCC BAA-245 / DSM 16553 / LMG 16656 / NCTC 13227 / J2315 / CF5610) (Burkholderia cepacia (strain J2315)).